A 144-amino-acid polypeptide reads, in one-letter code: 3-hydroxyacyl-[acyl-carrier-protein] dehydratase FabZ (144 aa).

Histidine 51 is a catalytic residue.

Belongs to the thioester dehydratase family. FabZ subfamily.

It localises to the cytoplasm. The catalysed reaction is a (3R)-hydroxyacyl-[ACP] = a (2E)-enoyl-[ACP] + H2O. Its function is as follows. Involved in unsaturated fatty acids biosynthesis. Catalyzes the dehydration of short chain beta-hydroxyacyl-ACPs and long chain saturated and unsaturated beta-hydroxyacyl-ACPs. The sequence is that of 3-hydroxyacyl-[acyl-carrier-protein] dehydratase FabZ from Clostridium botulinum (strain ATCC 19397 / Type A).